Consider the following 226-residue polypeptide: Ribonuclease 3 (226 aa).

The RNase III domain maps to 6–128 (INRLQRKLGY…LIGGIFLDSD (123 aa)). Mg(2+) is bound at residue Glu-41. Asp-45 is a catalytic residue. Asp-114 and Glu-117 together coordinate Mg(2+). Glu-117 is an active-site residue. In terms of domain architecture, DRBM spans 155–225 (DPKTRLQEFL…AEQALKKLEL (71 aa)).

This sequence belongs to the ribonuclease III family. Homodimer. The cofactor is Mg(2+).

The protein localises to the cytoplasm. The enzyme catalyses Endonucleolytic cleavage to 5'-phosphomonoester.. Functionally, digests double-stranded RNA. Involved in the processing of primary rRNA transcript to yield the immediate precursors to the large and small rRNAs (23S and 16S). Processes some mRNAs, and tRNAs when they are encoded in the rRNA operon. Processes pre-crRNA and tracrRNA of type II CRISPR loci if present in the organism. The protein is Ribonuclease 3 of Pectobacterium carotovorum subsp. carotovorum (strain PC1).